A 336-amino-acid chain; its full sequence is MLQSLAGSSCVRLVERHRSAWCFGLLVLGYLLYLVFGAVVFSSVELPYEDLLRQELRKLKRRFLEEHECLSEPQLEQFLGRVLEASNYGVSVLSNASGNWNWDFTSALFFASTVLSTTGYGHTVPLSDGGKAFCIIYSVIGIPFTLLFLTAVVQRITVHVTRRPVLYFHIRWGFSKQMVGIVHAVVLGFVTVSCFFFIPAAVFSVLEDDWNFLESFYFCFISLSTIGLGDYVPGEGYNQKFRELYKIGITCYLLLGLIAMLVVLETFCELHELKKFRKMFYVKKDKDEDQVHIVEHDQLSFSSITDQAASVKEEQKQSEPFVAAQVSAYAEDSASH.

The Cytoplasmic portion of the chain corresponds to 1 to 20; that stretch reads MLQSLAGSSCVRLVERHRSA. Residues 21 to 41 form a helical membrane-spanning segment; the sequence is WCFGLLVLGYLLYLVFGAVVF. Topologically, residues 42–103 are extracellular; that stretch reads SSVELPYEDL…SNASGNWNWD (62 aa). N95 is a glycosylation site (N-linked (GlcNAc...) asparagine). The segment at residues 104-116 is an intramembrane region (helical); sequence FTSALFFASTVLS. The stretch at 117–122 is an intramembrane region; it reads TTGYGH. A selectivity filter 1 region spans residues 117 to 122; that stretch reads TTGYGH. Over 123–132 the chain is Extracellular; it reads TVPLSDGGKA. Residues 133–156 traverse the membrane as a helical segment; that stretch reads FCIIYSVIGIPFTLLFLTAVVQRI. Residues 157–181 are Cytoplasmic-facing; that stretch reads TVHVTRRPVLYFHIRWGFSKQMVGI. The helical transmembrane segment at 182–202 threads the bilayer; the sequence is VHAVVLGFVTVSCFFFIPAAV. Over 203 to 211 the chain is Extracellular; the sequence is FSVLEDDWN. The helical intramembrane region spans 212–224; sequence FLESFYFCFISLS. The segment at 225–230 is selectivity filter 2; that stretch reads TIGLGD. An intramembrane segment occupies 225-231; the sequence is TIGLGDY. The Extracellular segment spans residues 232–243; that stretch reads VPGEGYNQKFRE. Residues 244–267 form a helical membrane-spanning segment; that stretch reads LYKIGITCYLLLGLIAMLVVLETF. At 268–336 the chain is on the cytoplasmic side; the sequence is CELHELKKFR…SAYAEDSASH (69 aa). A Glycyl lysine isopeptide (Lys-Gly) (interchain with G-Cter in SUMO) cross-link involves residue K274. Residues 293–299 are important for intracellular retention in recycling endosomes; sequence IVEHDQL.

Belongs to the two pore domain potassium channel (TC 1.A.1.8) family. As to quaternary structure, homodimer; disulfide-linked. Heterodimer with KCNK2; disulfide-linked. In astrocytes, forms mostly heterodimeric potassium channels with KCNK2, with only a minor proportion of functional channels containing homodimeric KCNK1. Interacts with KCNK3 and KCNK9, forming functional heterodimeric channels. Interacts with GNG4. Identified in a complex with PSD and ARF6; interacts only with PSD that is bound to ARF6. Interacts with UBE2I. In terms of processing, sumoylation is controversial. Sumoylated by UBE2I. Not sumoylated when expressed in xenopus oocytes or mammalian cells. Sumoylation inactivates the channel, but does not interfere with expression at the cell membrane. Sumoylation of a single subunit is sufficient to silence the dimeric channel. Sumoylation of KCNK1 is sufficient to silence heterodimeric channels formed by KCNK1 and KCNK3 or KCNK9. Desumoylated by SENP1; this activates the channel. Desumoylated by SENP1; this strongly increases halothane-mediated activation of heterodimeric channels formed with KCNK9. SENP1 treatment has no effect.

It localises to the cell membrane. The protein resides in the recycling endosome. It is found in the synaptic cell membrane. Its subcellular location is the cytoplasmic vesicle. The protein localises to the perikaryon. It localises to the cell projection. The protein resides in the dendrite. It is found in the apical cell membrane. The catalysed reaction is K(+)(in) = K(+)(out). It catalyses the reaction NH4(+)(in) = NH4(+)(out). It carries out the reaction Na(+)(in) = Na(+)(out). The enzyme catalyses Rb(+)(in) = Rb(+)(out). The catalysed reaction is Cs(+)(in) = Cs(+)(out). It catalyses the reaction Li(+)(in) = Li(+)(out). It carries out the reaction L-glutamate(out) = L-glutamate(in). The enzyme catalyses chloride(in) = chloride(out). Functionally, ion channel that contributes to passive transmembrane potassium transport and to the regulation of the resting membrane potential in brain astrocytes, but also in kidney and in other tissues. Forms dimeric channels through which potassium ions pass in accordance with their electrochemical gradient. The channel is selective for K(+) ions at physiological potassium concentrations and at neutral pH, but becomes permeable to Na(+) at subphysiological K(+) levels and upon acidification of the extracellular medium. The homodimer has very low potassium channel activity, when expressed in heterologous systems, and can function as weakly inward rectifying potassium channel. Channel activity is modulated by activation of serotonin receptors. Heterodimeric channels containing KCNK1 and KCNK2 have much higher activity, and may represent the predominant form in astrocytes. Heterodimeric channels containing KCNK1 and KCNK3 or KCNK9 have much higher activity. Heterodimeric channels formed by KCNK1 and KCNK9 may contribute to halothane-sensitive currents. Mediates outward rectifying potassium currents in dentate gyrus granule cells and contributes to the regulation of their resting membrane potential. Contributes to the regulation of action potential firing in dentate gyrus granule cells and down-regulates their intrinsic excitability. In astrocytes, the heterodimer formed by KCNK1 and KCNK2 is required for rapid glutamate release in response to activation of G-protein coupled receptors, such as F2R and CNR1. Required for normal ion and water transport in the kidney. Contributes to the regulation of the resting membrane potential of pancreatic beta cells. The low channel activity of homodimeric KCNK1 may be due to sumoylation. The low channel activity may be due to rapid internalization from the cell membrane and retention in recycling endosomes. Permeable to monovalent cations with ion selectivity for K(+) &gt; Rb(+) &gt;&gt; NH4(+) &gt;&gt; Cs(+) = Na(+) = Li(+). This chain is Potassium channel subfamily K member 1, found in Cavia porcellus (Guinea pig).